The sequence spans 149 residues: General odorant-binding protein 99b (149 aa).

An N-terminal signal peptide occupies residues 1–16 (MKVLIVLLLGLAFVLA). 3 cysteine pairs are disulfide-bonded: C40–C71, C67–C125, and C114–C134.

This sequence belongs to the PBP/GOBP family. Expressed in adult olfactory system. Expressed in subsets of sensilla in both olfactory organs, the maxillary palps, and third antennal segments.

The protein resides in the secreted. Present in the aqueous fluid surrounding olfactory sensory dendrites and are thought to aid in the capture and transport of hydrophobic odorants into and through this fluid. This Drosophila melanogaster (Fruit fly) protein is General odorant-binding protein 99b (Obp99b).